We begin with the raw amino-acid sequence, 206 residues long: Urease accessory protein UreG (206 aa).

11-18 serves as a coordination point for GTP; it reads GPVGAGKT.

Belongs to the SIMIBI class G3E GTPase family. UreG subfamily. As to quaternary structure, homodimer. UreD, UreF and UreG form a complex that acts as a GTP-hydrolysis-dependent molecular chaperone, activating the urease apoprotein by helping to assemble the nickel containing metallocenter of UreC. The UreE protein probably delivers the nickel.

The protein resides in the cytoplasm. In terms of biological role, facilitates the functional incorporation of the urease nickel metallocenter. This process requires GTP hydrolysis, probably effectuated by UreG. In Ureaplasma parvum serovar 3 (strain ATCC 700970), this protein is Urease accessory protein UreG.